A 64-amino-acid chain; its full sequence is Large ribosomal subunit protein bL35 (64 aa).

This sequence belongs to the bacterial ribosomal protein bL35 family.

In Pseudomonas entomophila (strain L48), this protein is Large ribosomal subunit protein bL35.